A 134-amino-acid polypeptide reads, in one-letter code: 16 kDa beta-galactoside-binding lectin (134 aa).

An N-acetylmethionine modification is found at Met-1. The Galectin domain maps to 4–134; sequence GLVVTQLDVQ…DFKVKAIKFS (131 aa). Position 69-75 (69-75) interacts with a beta-D-galactoside; sequence WGEEDRK.

Homodimer. As to expression, mainly in the liver (adult), mainly in the muscle (embryo).

Its function is as follows. This protein binds beta-galactoside. Its physiological function is not yet known. It may be involved in the regulation of differentiation. This Gallus gallus (Chicken) protein is 16 kDa beta-galactoside-binding lectin.